The sequence spans 113 residues: Dolichyl-diphosphooligosaccharide--protein glycosyltransferase subunit dad-1 (113 aa).

Residues 1 to 32 lie on the Cytoplasmic side of the membrane; the sequence is MAAQVVPVLSKLFDDYQKTTSSKLKIIDAYMT. Residues 33-53 form a helical membrane-spanning segment; that stretch reads YILFTGIFQFIYCLLVGTFPF. Residues 54–55 lie on the Lumenal side of the membrane; sequence NS. A helical membrane pass occupies residues 56 to 78; the sequence is FLSGFISTVTSFVLASCLRMQVN. Residues 79-92 are Cytoplasmic-facing; sequence QENRSEFTAVSTER. Residues 93 to 113 form a helical membrane-spanning segment; sequence AFADFIFANLILHLVVVNFLG.

Belongs to the DAD/OST2 family. Component of the oligosaccharyltransferase (OST) complex.

The protein localises to the endoplasmic reticulum membrane. Its pathway is protein modification; protein glycosylation. Subunit of the oligosaccharyl transferase (OST) complex that catalyzes the initial transfer of a defined glycan (Glc(3)Man(9)GlcNAc(2) in eukaryotes) from the lipid carrier dolichol-pyrophosphate to an asparagine residue within an Asn-X-Ser/Thr consensus motif in nascent polypeptide chains, the first step in protein N-glycosylation. N-glycosylation occurs cotranslationally and the complex associates with the Sec61 complex at the channel-forming translocon complex that mediates protein translocation across the endoplasmic reticulum (ER). All subunits are required for a maximal enzyme activity. Possesses cell death-inhibiting activity. Suppresses some programmed cell death in C.elegans. The protein is Dolichyl-diphosphooligosaccharide--protein glycosyltransferase subunit dad-1 of Caenorhabditis elegans.